The following is a 161-amino-acid chain: MSGALSEAGAGPRPVVIHTDGACSGNPGPGGWGAILKFGDTEKELKGGEAHTTNNRMELLAAISALEALTRPCTVDLYTDSQYVKNGIGSWIHNWKRNGWKTADKKPVKNVDLWQRLDAALKSHQVRWHWVKGHAGHDENERADQLARDGLTENRMKSRIG.

One can recognise an RNase H type-1 domain in the interval Gly-11–Thr-152. Positions 20, 58, 80, and 144 each coordinate Mg(2+). The disordered stretch occupies residues His-137 to Gly-161.

This sequence belongs to the RNase H family. Monomer. The cofactor is Mg(2+).

The protein localises to the cytoplasm. It carries out the reaction Endonucleolytic cleavage to 5'-phosphomonoester.. Endonuclease that specifically degrades the RNA of RNA-DNA hybrids. This Rhodopseudomonas palustris (strain HaA2) protein is Ribonuclease H.